Reading from the N-terminus, the 540-residue chain is Amino acid transporter AVT1B (540 aa).

The span at 1–11 (MNHSTSDQSLY) shows a compositional bias: polar residues. The interval 1 to 55 (MNHSTSDQSLYIESDDGDDERKHLSDDEDDDGTLSDTSDAYNQNQHHLSKASPYS) is disordered. The next 11 membrane-spanning stretches (helical) occupy residues 155-175 (AVLNGVNVLCGVGILSTPYAV), 180-200 (WLGLIILFAFGILCFYTGLLL), 227-247 (ILVSVILYMELYAMSVEYIIL), 273-293 (LFALLTTLAVLPTVWLRDLSV), 297-317 (ISAGGVIASVLVVLCLFWVGL), 332-352 (LATLPVSVGLYGYCYSGHGVF), 367-387 (AVLLASFGICTLMYAGVAVMG), 412-432 (IALWTTVVNPFTKYALTLSPV), 452-474 (IAIRSALAISTLLVGLAIPFFGL), 478-500 (LIGSFLTMLITLILPPACFLSIL), and 511-531 (ICILIMTVGAVCSVIGTYSAL).

This sequence belongs to the amino acid/polyamine transporter 2 family. Amino acid/auxin permease (AAAP) (TC 2.A.18.5) subfamily.

The protein resides in the membrane. The protein is Amino acid transporter AVT1B of Arabidopsis thaliana (Mouse-ear cress).